A 205-amino-acid chain; its full sequence is Large ribosomal subunit protein bL25 (205 aa).

Belongs to the bacterial ribosomal protein bL25 family. CTC subfamily. Part of the 50S ribosomal subunit; part of the 5S rRNA/L5/L18/L25 subcomplex. Contacts the 5S rRNA. Binds to the 5S rRNA independently of L5 and L18.

In terms of biological role, this is one of the proteins that binds to the 5S RNA in the ribosome where it forms part of the central protuberance. The polypeptide is Large ribosomal subunit protein bL25 (Stutzerimonas stutzeri (strain A1501) (Pseudomonas stutzeri)).